An 807-amino-acid chain; its full sequence is Putative histidine biosynthesis bifunctional protein HisCD (807 aa).

A histidinol dehydrogenase region spans residues 1 to 440 (MTDHFDTLIR…ALNIAGQGVN (440 aa)). Positions 261 and 264 each coordinate Zn(2+). Residues Glu-328 and His-329 contribute to the active site. Residues Asp-362 and His-421 each coordinate Zn(2+). The tract at residues 441 to 807 (MNNIFDANLL…VNEQPKEIAN (367 aa)) is histidinol-phosphate aminotransferase. N6-(pyridoxal phosphate)lysine is present on Lys-655.

In the N-terminal section; belongs to the histidinol dehydrogenase family. It in the C-terminal section; belongs to the class-II pyridoxal-phosphate-dependent aminotransferase family. Histidinol-phosphate aminotransferase subfamily. In terms of assembly, homodimer. Requires Zn(2+) as cofactor. Pyridoxal 5'-phosphate is required as a cofactor.

The catalysed reaction is L-histidinol phosphate + 2-oxoglutarate = 3-(imidazol-4-yl)-2-oxopropyl phosphate + L-glutamate. It catalyses the reaction L-histidinol + 2 NAD(+) + H2O = L-histidine + 2 NADH + 3 H(+). Its pathway is amino-acid biosynthesis; L-histidine biosynthesis; L-histidine from 5-phospho-alpha-D-ribose 1-diphosphate: step 7/9. The protein operates within amino-acid biosynthesis; L-histidine biosynthesis; L-histidine from 5-phospho-alpha-D-ribose 1-diphosphate: step 9/9. Its function is as follows. Catalyzes the sequential NAD-dependent oxidations of L-histidinol to L-histidinaldehyde and then to L-histidine. This chain is Putative histidine biosynthesis bifunctional protein HisCD (hisCD), found in Photorhabdus laumondii subsp. laumondii (strain DSM 15139 / CIP 105565 / TT01) (Photorhabdus luminescens subsp. laumondii).